The primary structure comprises 273 residues: Glutamate racemase (273 aa).

Substrate is bound by residues 7-8 (DS) and 39-40 (YG). Residue cysteine 70 is the Proton donor/acceptor of the active site. Substrate is bound at residue 71–72 (NT). The active-site Proton donor/acceptor is the cysteine 194. 195 to 196 (TH) contacts substrate.

This sequence belongs to the aspartate/glutamate racemases family.

The enzyme catalyses L-glutamate = D-glutamate. It participates in cell wall biogenesis; peptidoglycan biosynthesis. Functionally, provides the (R)-glutamate required for cell wall biosynthesis. This Dinoroseobacter shibae (strain DSM 16493 / NCIMB 14021 / DFL 12) protein is Glutamate racemase.